The chain runs to 333 residues: Adenosine deaminase (333 aa).

Histidine 12 and histidine 14 together coordinate Zn(2+). The substrate site is built by histidine 14, aspartate 16, and glycine 170. Position 197 (histidine 197) interacts with Zn(2+). Glutamate 200 serves as the catalytic Proton donor. Aspartate 278 serves as a coordination point for Zn(2+). Residue aspartate 279 participates in substrate binding.

It belongs to the metallo-dependent hydrolases superfamily. Adenosine and AMP deaminases family. Adenosine deaminase subfamily. It depends on Zn(2+) as a cofactor.

The enzyme catalyses adenosine + H2O + H(+) = inosine + NH4(+). It carries out the reaction 2'-deoxyadenosine + H2O + H(+) = 2'-deoxyinosine + NH4(+). In terms of biological role, catalyzes the hydrolytic deamination of adenosine and 2-deoxyadenosine. In Escherichia coli O157:H7, this protein is Adenosine deaminase.